The sequence spans 145 residues: Small ribosomal subunit protein bS16 (145 aa).

The segment at 82 to 145 (IKERAATNNP…EAAAEEQTEA (64 aa)) is disordered. Residues 95–115 (EPGKKAKERAEERAEKAREAA) show a composition bias toward basic and acidic residues. Low complexity predominate over residues 116–137 (EAAAAAAAAPAEEAAAEAPAEA).

It belongs to the bacterial ribosomal protein bS16 family.

In Novosphingobium aromaticivorans (strain ATCC 700278 / DSM 12444 / CCUG 56034 / CIP 105152 / NBRC 16084 / F199), this protein is Small ribosomal subunit protein bS16.